A 657-amino-acid chain; its full sequence is Acetyl-coenzyme A synthetase (657 aa).

CoA contacts are provided by residues 192 to 195 (RRGK) and threonine 311. Residues 387-389 (GEP), 411-416 (DTWWQT), aspartate 504, arginine 519, and arginine 530 contribute to the ATP site. Mg(2+)-binding residues include histidine 543 and valine 546. Arginine 592 is a CoA binding site. Position 617 is an N6-acetyllysine (lysine 617).

The protein belongs to the ATP-dependent AMP-binding enzyme family. Mg(2+) serves as cofactor. Acetylated. Deacetylation by the SIR2-homolog deacetylase activates the enzyme.

The enzyme catalyses acetate + ATP + CoA = acetyl-CoA + AMP + diphosphate. Functionally, catalyzes the conversion of acetate into acetyl-CoA (AcCoA), an essential intermediate at the junction of anabolic and catabolic pathways. AcsA undergoes a two-step reaction. In the first half reaction, AcsA combines acetate with ATP to form acetyl-adenylate (AcAMP) intermediate. In the second half reaction, it can then transfer the acetyl group from AcAMP to the sulfhydryl group of CoA, forming the product AcCoA. This Campylobacter jejuni subsp. jejuni serotype O:2 (strain ATCC 700819 / NCTC 11168) protein is Acetyl-coenzyme A synthetase.